The primary structure comprises 536 residues: Phosphoenolpyruvate carboxykinase (ATP) (536 aa).

Substrate contacts are provided by arginine 63, tyrosine 203, and lysine 209. Residues lysine 209, histidine 228, and 244–252 (GLSGTGKTT) contribute to the ATP site. 2 residues coordinate Mn(2+): lysine 209 and histidine 228. Aspartate 265 serves as a coordination point for Mn(2+). ATP is bound by residues glutamate 293, arginine 329, 445-446 (RI), and threonine 451. Arginine 329 is a substrate binding site.

This sequence belongs to the phosphoenolpyruvate carboxykinase (ATP) family. As to quaternary structure, monomer. Requires Mn(2+) as cofactor.

The protein resides in the cytoplasm. The catalysed reaction is oxaloacetate + ATP = phosphoenolpyruvate + ADP + CO2. The protein operates within carbohydrate biosynthesis; gluconeogenesis. Functionally, involved in the gluconeogenesis. Catalyzes the conversion of oxaloacetate (OAA) to phosphoenolpyruvate (PEP) through direct phosphoryl transfer between the nucleoside triphosphate and OAA. This Colwellia psychrerythraea (strain 34H / ATCC BAA-681) (Vibrio psychroerythus) protein is Phosphoenolpyruvate carboxykinase (ATP).